Reading from the N-terminus, the 179-residue chain is Cell division protein ZapC (179 aa).

The protein belongs to the ZapC family. As to quaternary structure, interacts directly with FtsZ.

The protein localises to the cytoplasm. Contributes to the efficiency of the cell division process by stabilizing the polymeric form of the cell division protein FtsZ. Acts by promoting interactions between FtsZ protofilaments and suppressing the GTPase activity of FtsZ. In Aliivibrio salmonicida (strain LFI1238) (Vibrio salmonicida (strain LFI1238)), this protein is Cell division protein ZapC.